A 197-amino-acid polypeptide reads, in one-letter code: 7-methyl-GTP pyrophosphatase (197 aa).

The active-site Proton acceptor is the D74.

This sequence belongs to the Maf family. YceF subfamily. A divalent metal cation serves as cofactor.

Its subcellular location is the cytoplasm. It catalyses the reaction N(7)-methyl-GTP + H2O = N(7)-methyl-GMP + diphosphate + H(+). Its function is as follows. Nucleoside triphosphate pyrophosphatase that hydrolyzes 7-methyl-GTP (m(7)GTP). May have a dual role in cell division arrest and in preventing the incorporation of modified nucleotides into cellular nucleic acids. The sequence is that of 7-methyl-GTP pyrophosphatase from Saccharophagus degradans (strain 2-40 / ATCC 43961 / DSM 17024).